Here is a 361-residue protein sequence, read N- to C-terminus: sn-glycerol-3-phosphate import ATP-binding protein UgpC (361 aa).

One can recognise an ABC transporter domain in the interval 4–235; it reads LSLKGIRKSY…PETVFVAGFI (232 aa). Residue 37–44 participates in ATP binding; it reads GPSGCGKS.

Belongs to the ABC transporter superfamily. sn-glycerol-3-phosphate importer (TC 3.A.1.1.3) family. In terms of assembly, the complex is composed of two ATP-binding proteins (UgpC), two transmembrane proteins (UgpA and UgpE) and a solute-binding protein (UgpB).

The protein localises to the cell inner membrane. The enzyme catalyses sn-glycerol 3-phosphate(out) + ATP + H2O = sn-glycerol 3-phosphate(in) + ADP + phosphate + H(+). Functionally, part of the ABC transporter complex UgpBAEC involved in sn-glycerol-3-phosphate (G3P) import. Responsible for energy coupling to the transport system. The polypeptide is sn-glycerol-3-phosphate import ATP-binding protein UgpC (Burkholderia ambifaria (strain ATCC BAA-244 / DSM 16087 / CCUG 44356 / LMG 19182 / AMMD) (Burkholderia cepacia (strain AMMD))).